A 1035-amino-acid polypeptide reads, in one-letter code: Teashirt homolog 2 (1035 aa).

A disordered region spans residues 1 to 92; sequence MPRRKQQAPK…ESLLSDASDQ (92 aa). Positions 13–42 form a coiled coil; that stretch reads AGYAQEEQLKEEEEIKEEEEEEEDSGSVAQ. Acidic residues predominate over residues 21–37; the sequence is LKEEEEIKEEEEEEEDS. Composition is skewed to polar residues over residues 39–49 and 66–92; these read SVAQLQGSNDP and SYQN…ASDQ. Lys189 is covalently cross-linked (Glycyl lysine isopeptide (Lys-Gly) (interchain with G-Cter in SUMO2)). 2 C2H2-type zinc fingers span residues 216 to 240 and 276 to 300; these read FRCR…ETGH and LKCM…KTKH. Residues 240–266 are disordered; it reads HYQDDNRKKDKLRPTSYSKPRKRAFQD. Glycyl lysine isopeptide (Lys-Gly) (interchain with G-Cter in SUMO2) cross-links involve residues Lys307 and Lys316. A C2H2-type 3; atypical zinc finger spans residues 381-405; the sequence is LKCMECGSSHDTLQQLTTHMMVTGH. Lys418 is covalently cross-linked (Glycyl lysine isopeptide (Lys-Gly) (interchain with G-Cter in SUMO2)). A compositionally biased stretch (low complexity) spans 432-450; sequence SLSDAPSSDSLAPKPSSNS. The tract at residues 432 to 496 is disordered; it reads SLSDAPSSDS…DPLQKPLDPA (65 aa). The segment covering 460-483 has biased composition (basic and acidic residues); the sequence is ELKRESKKEKPEELRTDEKVLKSE. Glycyl lysine isopeptide (Lys-Gly) (interchain with G-Cter in SUMO2) cross-links involve residues Lys462, Lys481, Lys498, and Lys602. Disordered regions lie at residues 600-674 and 764-791; these read QVKK…VEPV and QPID…PQKH. Residues 601–669 show a composition bias toward basic and acidic residues; sequence VKKEPEDKEE…KDGGEKEKAQ (69 aa). Residues Lys801 and Lys821 each participate in a glycyl lysine isopeptide (Lys-Gly) (interchain with G-Cter in SUMO2) cross-link. The homeobox DNA-binding region spans 842 to 912; it reads RKGRQSNWNP…NVKYQLRKTG (71 aa). Residues 927-949 form a C2H2-type 4 zinc finger; it reads FYCSDCASQFRTPSTYISHLESH. Residues 968-977 show a composition bias toward low complexity; that stretch reads VEQEISRVSS. Disordered stretches follow at residues 968-987 and 1015-1035; these read VEQE…TIAG and SKTH…VDEE. Ser981 bears the Phosphoserine mark. A C2H2-type 5 zinc finger spans residues 995–1018; that stretch reads FKCKLCCRTFVSKHAVKLHLSKTH.

Belongs to the teashirt C2H2-type zinc-finger protein family. Interacts (via homeobox domain) with APBB1 (via PID domain 1). Sumoylated.

It localises to the nucleus. In terms of biological role, probable transcriptional regulator involved in developmental processes. May act as a transcriptional repressor (Potential). The sequence is that of Teashirt homolog 2 (TSHZ2) from Sus scrofa (Pig).